A 132-amino-acid polypeptide reads, in one-letter code: Spermatogenesis-associated protein 33 (132 aa).

Positions 1 to 60 (MGQSKSKPREKKEEEKSTTTLVTKSKEKVMEKEAKQSDKESQPAESLLFATSKHSRPSSS) are interaction with ATG16L1. Positions 1-81 (MGQSKSKPRE…SKKRSVIPQI (81 aa)) are disordered. Positions 24–42 (KSKEKVMEKEAKQSDKESQ) are enriched in basic and acidic residues. The interaction with VDAC2 stretch occupies residues 61–132 (SEDKPETKQR…IAAYDVHNTE (72 aa)). Residues 79-84 (PQIIIT) carry the PQIIIT motif. Serine 87 is modified (phosphoserine). Positions 110-132 (DWGPYHRHRSPSTIAAYDVHNTE) are disordered.

In terms of assembly, interacts (via PQIIIT motif) with PPP3R2 and PPP3CC. Interacts with VDAC2. Interacts with ATG16L1 (via WD repeats). Interacts with PPP3R1, PPP3CA and PPP3CB. In terms of tissue distribution, predominantly expressed in the testis (at protein level). Expressed in the sperm midpiece (at protein level).

It is found in the cytoplasm. It localises to the cytosol. Its subcellular location is the nucleus. The protein localises to the mitochondrion. Functionally, plays an important role in sperm motility and male fertility. Required for sperm midpiece flexibility and for the localization of sperm calcineurin to the mitochondria. Promotes mitophagy as well as acts as an autophagy mediator in male germline cells. Links damaged mitochondria to autophagosomes via its binding to the outer mitochondrial membrane protein VDAC2, as well as to key autophagy machinery component ATG16L1. The sequence is that of Spermatogenesis-associated protein 33 (Spata33) from Mus musculus (Mouse).